The primary structure comprises 65 residues: Large ribosomal subunit protein bL35 (65 aa).

The interval 1–40 (MPKMKTNSGSKKRFALTGTGKIKRKHAFHSHILTKKSKKR) is disordered. A compositionally biased stretch (basic residues) spans 21–40 (KIKRKHAFHSHILTKKSKKR).

The protein belongs to the bacterial ribosomal protein bL35 family.

This chain is Large ribosomal subunit protein bL35, found in Bacteroides fragilis (strain ATCC 25285 / DSM 2151 / CCUG 4856 / JCM 11019 / LMG 10263 / NCTC 9343 / Onslow / VPI 2553 / EN-2).